Here is a 283-residue protein sequence, read N- to C-terminus: Ribosome biogenesis GTPase A (283 aa).

The 165-residue stretch at 14–178 (RREVTEKLKL…LLDTPGILWP (165 aa)) folds into the CP-type G domain. GTP is bound by residues 58-61 (NKAD), 86-87 (NS), 130-135 (NVGKST), and Gly174.

It belongs to the TRAFAC class YlqF/YawG GTPase family. MTG1 subfamily. As to quaternary structure, interacts with ctc. Interacts with the immature 50S ribosome subunit. 2 molecules of rbgA bind to one 50S subunit.

Its subcellular location is the cytoplasm. Functionally, essential protein that is required for a late step of 50S ribosomal subunit assembly. Has GTPase activity that is stimulated by interaction with the immature 50S ribosome subunit. Binds to the 23S rRNA. Required for the association of ribosomal proteins rplP and rpmA with the large subunit. This is Ribosome biogenesis GTPase A from Bacillus licheniformis (strain ATCC 14580 / DSM 13 / JCM 2505 / CCUG 7422 / NBRC 12200 / NCIMB 9375 / NCTC 10341 / NRRL NRS-1264 / Gibson 46).